Here is a 404-residue protein sequence, read N- to C-terminus: Cysteine desulfurase IscS (404 aa).

Pyridoxal 5'-phosphate-binding positions include 75–76 (AT), asparagine 155, glutamine 183, and 203–205 (SAH). Lysine 206 is modified (N6-(pyridoxal phosphate)lysine). A pyridoxal 5'-phosphate-binding site is contributed by threonine 243. Cysteine 328 (cysteine persulfide intermediate) is an active-site residue. Cysteine 328 is a [2Fe-2S] cluster binding site.

It belongs to the class-V pyridoxal-phosphate-dependent aminotransferase family. NifS/IscS subfamily. Homodimer. Forms a heterotetramer with IscU, interacts with other sulfur acceptors. Requires pyridoxal 5'-phosphate as cofactor.

The protein localises to the cytoplasm. It carries out the reaction (sulfur carrier)-H + L-cysteine = (sulfur carrier)-SH + L-alanine. Its pathway is cofactor biosynthesis; iron-sulfur cluster biosynthesis. Master enzyme that delivers sulfur to a number of partners involved in Fe-S cluster assembly, tRNA modification or cofactor biosynthesis. Catalyzes the removal of elemental sulfur atoms from cysteine to produce alanine. Functions as a sulfur delivery protein for Fe-S cluster synthesis onto IscU, an Fe-S scaffold assembly protein, as well as other S acceptor proteins. The protein is Cysteine desulfurase IscS of Neisseria meningitidis serogroup C / serotype 2a (strain ATCC 700532 / DSM 15464 / FAM18).